A 464-amino-acid polypeptide reads, in one-letter code: Probable multidrug resistance protein NorM (464 aa).

The next 12 helical transmembrane spans lie at 22-42, 64-84, 104-124, 142-162, 172-192, 204-224, 258-278, 288-308, 326-346, 358-378, 384-404, and 410-430; these read LIKL…FGMA, VFWV…VTIA, FLAI…DVLI, LKVI…SAML, MIVT…MIFG, AAVA…YVIF, FVFS…GAEA, VESL…TLVG, GWIL…LFPE, IIEI…FLAI, GALR…ISIW, and VAFV…IGMI.

Belongs to the multi antimicrobial extrusion (MATE) (TC 2.A.66.1) family.

The protein localises to the cell membrane. Multidrug efflux pump. This is Probable multidrug resistance protein NorM (norM) from Thermotoga maritima (strain ATCC 43589 / DSM 3109 / JCM 10099 / NBRC 100826 / MSB8).